The primary structure comprises 456 residues: Phosphomethylpyrimidine synthase (456 aa).

Substrate-binding positions include Asn-80, Met-109, Tyr-139, His-175, 195-197 (SRG), 236-239 (DSLR), and Glu-275. His-279 contacts Zn(2+). Residue Tyr-302 coordinates substrate. His-343 provides a ligand contact to Zn(2+). Residues Cys-423, Cys-426, and Cys-431 each coordinate [4Fe-4S] cluster.

The protein belongs to the ThiC family. [4Fe-4S] cluster is required as a cofactor.

The enzyme catalyses 5-amino-1-(5-phospho-beta-D-ribosyl)imidazole + S-adenosyl-L-methionine = 4-amino-2-methyl-5-(phosphooxymethyl)pyrimidine + CO + 5'-deoxyadenosine + formate + L-methionine + 3 H(+). It functions in the pathway cofactor biosynthesis; thiamine diphosphate biosynthesis. Catalyzes the synthesis of the hydroxymethylpyrimidine phosphate (HMP-P) moiety of thiamine from aminoimidazole ribotide (AIR) in a radical S-adenosyl-L-methionine (SAM)-dependent reaction. The polypeptide is Phosphomethylpyrimidine synthase (Synechococcus elongatus (strain ATCC 33912 / PCC 7942 / FACHB-805) (Anacystis nidulans R2)).